Consider the following 358-residue polypeptide: 3-dehydroquinate synthase (358 aa).

NAD(+)-binding positions include 70 to 75 (DGEQYK), 104 to 108 (GVVGD), 128 to 129 (TT), K141, K150, and 168 to 171 (CLNT). Zn(2+) contacts are provided by E183, H246, and H263.

Belongs to the sugar phosphate cyclases superfamily. Dehydroquinate synthase family. Co(2+) serves as cofactor. Requires Zn(2+) as cofactor. NAD(+) is required as a cofactor.

The protein localises to the cytoplasm. It carries out the reaction 7-phospho-2-dehydro-3-deoxy-D-arabino-heptonate = 3-dehydroquinate + phosphate. The protein operates within metabolic intermediate biosynthesis; chorismate biosynthesis; chorismate from D-erythrose 4-phosphate and phosphoenolpyruvate: step 2/7. In terms of biological role, catalyzes the conversion of 3-deoxy-D-arabino-heptulosonate 7-phosphate (DAHP) to dehydroquinate (DHQ). The chain is 3-dehydroquinate synthase from Shewanella sediminis (strain HAW-EB3).